The following is a 335-amino-acid chain: Fructose-1,6-bisphosphatase class 1 (335 aa).

The Mg(2+) site is built by Glu-92, Asp-114, Leu-116, and Asp-117. Substrate is bound by residues 117-120, Asn-209, and Lys-275; that span reads DGSS. Glu-281 provides a ligand contact to Mg(2+).

Belongs to the FBPase class 1 family. As to quaternary structure, homotetramer. Requires Mg(2+) as cofactor.

The protein resides in the cytoplasm. The catalysed reaction is beta-D-fructose 1,6-bisphosphate + H2O = beta-D-fructose 6-phosphate + phosphate. Its pathway is carbohydrate biosynthesis; gluconeogenesis. The sequence is that of Fructose-1,6-bisphosphatase class 1 from Paracidovorax citrulli (strain AAC00-1) (Acidovorax citrulli).